The sequence spans 1530 residues: MNQNSDTTHGQALGSTLNHTTEVTRISNSSDHFEDSSSNVDESLDSSNPSSNEKASHTNEEYRSKGNQSYVPSSSNEPSPESSSNSDSSSSDDSSVDRLAGDPFELGENFNLKHYLRAYKDSLQRDDIITRSSGVCMRDHSVYGVGSGYEFLKTFPDIFLQPYRAITEKQVVEKAILSHCHALANAGELVMVLGQPGSGCSTFLRSVTSDTVHYKRVEGTTHYDGIDKADMKKFFPGDLLYSGENDVHFPSLTTAETLDFAAKCRTPNNRPCNLTRQEYVSRERHLIATAFGLTHTFNTKVGNDFVRGVSGGERKRVTISEGFATRPTIACWDNSTRGLDSSTAFEFVNVLRTCANELKMTSFVTAYQASEKIYKLFDRICVLYAGRQIYYGPADKAKQYFLDMGFDCHPRETTPDFLTAISDPKARFPRKGFENRVPRTPDEFEQMWRNSSVYADLMAEMESYDKRWTETTPASSEAPEKDNFGSDISATTKHELYRQSAVAEKSKRVKDTSPYTVTFSQQLWYCLARSWERYINDPAYIGSMAFAFLFQSLIIGSIFYDMKLNTVDVFSRGGVLFFSILFCALQSLSEIANMFSQRPIIAKHRASALYHPAADVISSLIVDLPFRFINISVFSIVLYFLTNLKRTAGGFWTYFLFLFIGATCMSAFFRSLAGIMPNVESASALGGIGVLAIAIYTGYAIPNIDVGWWFRWIAYLDPLQFGFESLMINEFKARQFECSQLIPYGSGYDNYPVANKICPVTSAEPGTDYVDGSTYLYISFNYKTRQLWRNLAIIIGYYAFLVFVNIVASETLNFNDLKGEYLVFRRGHAPDAVKAAVNEGGKPLDLETGQDTQGGDVVKESPDNEEELNKEYEGIEKGHDIFSWRNLNYDIQIKGEHRRLLNGVQGFVVPGKLTALMGESGAGKTTLLNVLAQRVDTGVVTGDMLVNGRGLDSTFQRRTGYVQQQDVHIGESTVREALRFSAALRQPASVPLSEKYEYVESVIKLLEMESYAEAIIGTPGSGLNVEQRKRATIGVELAAKPALLLFLDEPTSGLDSQSAWSIVCFLRKLADAGQAILCTIHQPSAVLFDQFDRLLLLQKGGKTVYFGDIGEHSKTLLNYFESHGAVHCPDDGNPAEYILDVIGAGATATTNRDWHEVWNNSEERKAISAELDKINASFSNSEDKKTLSKEDRSTYAMPLWFQVKMVMTRNFQSYWREPSILMSKLALDIFAGLFIGFTFYNQGLGVQNIQNKLFAVFMATVLAVPLINGLQPKFIELRNVFEVREKPSNIYSWVAFVFSAIIVEIPFNLVFGTLFFLCWFYPIKFYKHIHHPGDKTGYAWLLYMFFQMYFSTFGQAVASACPNAQTASVVNSLLFTFVITFNGVLQPNSNLVGFWHWMHSLTPFTYLIEGLLSDLVHGLPVECKSHEMLTINPPSGQTCGEYMSAFLTNNTAAGNLLNPNATTSCSYCPYQTADQFLERFSMRYTHRWRNLGIFVGYVFFNIFAVLLLFYVFRVMKLRSTWLGKKITGTG.

The span at 1–26 (MNQNSDTTHGQALGSTLNHTTEVTRI) shows a compositional bias: polar residues. Residues 1–100 (MNQNSDTTHG…SDDSSVDRLA (100 aa)) are disordered. A glycan (N-linked (GlcNAc...) asparagine) is linked at Asn28. The span at 36-48 (SSSNVDESLDSSN) shows a compositional bias: low complexity. The segment covering 54 to 64 (KASHTNEEYRS) has biased composition (basic and acidic residues). A glycan (N-linked (GlcNAc...) asparagine) is linked at Asn67. Low complexity predominate over residues 72–93 (PSSSNEPSPESSSNSDSSSSDD). The ABC transporter 1 domain occupies 153 to 410 (KTFPDIFLQP…FLDMGFDCHP (258 aa)). N-linked (GlcNAc...) asparagine glycans are attached at residues Asn273, Asn334, and Asn450. Phosphoserine is present on residues Ser486 and Ser489. Thr491 carries the post-translational modification Phosphothreonine. 6 helical membrane passes run 539–559 (AYIG…GSIF), 575–595 (VLFF…ANMF), 620–640 (LIVD…VLYF), 649–669 (GGFW…SAFF), 684–704 (ALGG…IPNI), and 791–811 (LAII…ASET). Positions 843–864 (PLDLETGQDTQGGDVVKESPDN) are disordered. Positions 882–1125 (FSWRNLNYDI…LLNYFESHGA (244 aa)) constitute an ABC transporter 2 domain. 918 to 925 (GESGAGKT) contributes to the ATP binding site. Asn1159 and Asn1175 each carry an N-linked (GlcNAc...) asparagine glycan. At Thr1186 the chain carries Phosphothreonine. The next 6 helical transmembrane spans lie at 1220–1240 (ILMS…FTFY), 1255–1275 (AVFM…PKFI), 1300–1320 (AIIV…LCWF), 1338–1358 (YAWL…QAVA), 1367–1387 (ASVV…VLQP), and 1392–1412 (VGFW…EGLL). 2 N-linked (GlcNAc...) asparagine glycosylation sites follow: Asn1449 and Asn1460. A helical membrane pass occupies residues 1492-1512 (GIFVGYVFFNIFAVLLLFYVF).

Belongs to the ABC transporter superfamily. ABCG family. PDR (TC 3.A.1.205) subfamily.

It is found in the membrane. Its function is as follows. Confers hyper-resistance to brefeldin A (BFA), an inhibitor of intracellular protein transport. Could serve as an efflux pump of various antibiotics. This is Brefeldin A resistance protein (bfr1) from Schizosaccharomyces pombe (strain 972 / ATCC 24843) (Fission yeast).